Here is a 790-residue protein sequence, read N- to C-terminus: Pentatricopeptide repeat-containing protein At1g25360 (790 aa).

PPR repeat units follow at residues 48 to 82 (RAHILNRLIDVYCKSSELNYARQLFDEISEPDKIA), 84 to 109 (TTMVSGYCASGDITLARGVFEKAPVC), 112 to 146 (DTVMYNAMITGFSHNNDGYSAINLFCKMKHEGFKP), 147 to 182 (DNFTFASVLAGLALVADDEKQCVQFHAAALKSGAGY), 183 to 217 (ITSVSNALVSVYSKCASSPSLLHSARKVFDEILEK), 218 to 248 (DERSWTTMMTGYVKNGYFDLGEELLEGMDDN), 250 to 284 (KLVAYNAMISGYVNRGFYQEALEMVRRMVSSGIEL), 285 to 315 (DEFTYPSVIRACATAGLLQLGKQVHAYVLRR), 319 to 349 (SFHFDNSLVSLYYKCGKFDEARAIFEKMPAK), 350 to 384 (DLVSWNALLSGYVSSGHIGEAKLIFKEMKEKNILS), 385 to 415 (WMIMISGLAENGFGEEGLKLFSCMKREGFEP), 416 to 450 (CDYAFSGAIKSCAVLGAYCNGQQYHAQLLKIGFDS), 451 to 481 (SLSAGNALITMYAKCGVVEEARQVFRTMPCL), 482 to 516 (DSVSWNALIAALGQHGHGAEAVDVYEEMLKKGIRP), 517 to 551 (DRITLLTVLTACSHAGLVDQGRKYFDSMETVYRIP), and 553 to 583 (GADHYARLIDLLCRSGKFSDAESVIESLPFK). The segment at 588–663 (IWEALLSGCR…EVACSWIEME (76 aa)) is type E motif. The interval 664–694 (TQVHTFLVDDTSHPEAEAVYIYLQDLGKEMR) is type E(+) motif. Residues 695–790 (RLGYVPDTSF…NGECSCGNFW (96 aa)) form a type DYW motif region.

The protein belongs to the PPR family. PCMP-H subfamily.

This is Pentatricopeptide repeat-containing protein At1g25360 (PCMP-H74) from Arabidopsis thaliana (Mouse-ear cress).